Here is a 221-residue protein sequence, read N- to C-terminus: Histone H1.3 (221 aa).

Over residues 1–17 (MSETAPVAPAAPAPAEK) the composition is skewed to low complexity. Residues 1–42 (MSETAPVAPAAPAPAEKTPVKKKAKKSGVAAGKRKASGPPVS) are disordered. Ser2 carries the post-translational modification N-acetylserine. Ser2 is modified (phosphoserine). Lys17 carries the post-translational modification N6-acetyllysine. Thr18 is subject to Phosphothreonine. Basic residues predominate over residues 20 to 36 (VKKKAKKSGVAAGKRKA). Residues Lys35 and Lys53 each carry the N6-(beta-hydroxybutyryl)lysine modification. Residues 37–110 (SGPPVSELIT…GASGSFKLNK (74 aa)) form the H15 domain. Arg55 carries the citrulline modification. An N6-(beta-hydroxybutyryl)lysine mark is found at Lys65, Lys86, and Lys91. Positions 87–221 (SLVSKGTLVQ…KAKKAVSKKK (135 aa)) are disordered. Residue Ser105 is modified to Phosphoserine; by PKC. Lys107 carries the post-translational modification N6-(beta-hydroxybutyryl)lysine. Basic residues-rich tracts occupy residues 120-141 (KGKKAGAAKPKKAAGAAKKPKK), 150-161 (KAAKKTPKKVKK), 170-187 (KVAKSPKKAKAAKPKKPT), and 194-221 (KAPKPKAAKPKAAKPKATKAKKAVSKKK).

This sequence belongs to the histone H1/H5 family. H1 histones are progressively phosphorylated during the cell cycle, becoming maximally phosphorylated during late G2 phase and M phase, and being dephosphorylated sharply thereafter. Post-translationally, citrullination at Arg-55 (H1R54ci) by PADI4 takes place within the DNA-binding site of H1 and results in its displacement from chromatin and global chromatin decondensation, thereby promoting pluripotency and stem cell maintenance.

The protein localises to the nucleus. Its subcellular location is the chromosome. H1 histones bind to linker DNA between nucleosomes forming the macromolecular structure known as the chromatin fiber. H1 histones are necessary for the condensation of nucleosome chains into higher-order structured fibers. Also acts as a regulator of individual gene transcription through chromatin remodeling, nucleosome spacing and DNA methylation. The polypeptide is Histone H1.3 (Bos taurus (Bovine)).